The sequence spans 107 residues: Anti-adapter protein IraM (107 aa).

This sequence belongs to the IraM/RssC family.

The protein resides in the cytoplasm. Functionally, inhibits RpoS proteolysis by regulating RssB activity, thereby increasing the stability of the sigma stress factor RpoS during magnesium starvation. This Escherichia coli O17:K52:H18 (strain UMN026 / ExPEC) protein is Anti-adapter protein IraM.